A 106-amino-acid chain; its full sequence is ELIEAVRLIKFLYQSNPPPKPEGTRQARRNRRRRWRERQRQIHSISERILSTYLGRSAEPVPLQLPPLERLTLDCNEDCGTSGTQGVGSPQILVESPTVLESGTKE.

Residues 8–16 (LIKFLYQSN) are homomultimerization. Residues 14–39 (QSNPPPKPEGTRQARRNRRRRWRERQ) form a disordered region. The Nuclear localization signal and RNA-binding (RRE) signature appears at 24–40 (TRQARRNRRRRWRERQR). Residues 26–37 (QARRNRRRRWRE) are compositionally biased toward basic residues. The Nuclear export signal and binding to XPO1 signature appears at 63-74 (LQLPPLERLTLD). A phosphoserine; by host mark is found at Ser-82 and Ser-89. The interval 82 to 106 (SGTQGVGSPQILVESPTVLESGTKE) is disordered.

This sequence belongs to the HIV-1 REV protein family. In terms of assembly, homomultimer; when bound to the RRE. Multimeric assembly is essential for activity and may involve XPO1. Binds to human KPNB1, XPO1, TNPO1, RANBP5 and IPO7. Interacts with the viral Integrase. Interacts with human KHDRBS1. Interacts with human NAP1; this interaction decreases Rev multimerization and stimulates its activity. Interacts with human DEAD-box helicases DDX3 and DDX24; these interactions may serve for viral RNA export to the cytoplasm and packaging, respectively. Interacts with human PSIP1; this interaction may inhibit HIV-1 DNA integration by promoting dissociation of the Integrase-LEDGF/p75 complex. In terms of processing, asymmetrically arginine dimethylated at one site by host PRMT6. Methylation impairs the RNA-binding activity and export of viral RNA from the nucleus to the cytoplasm. Phosphorylated by protein kinase CK2. Presence of, and maybe binding to the N-terminus of the regulatory beta subunit of CK2 is necessary for CK2-mediated Rev's phosphorylation.

The protein localises to the host nucleus. Its subcellular location is the host nucleolus. It localises to the host cytoplasm. Functionally, escorts unspliced or incompletely spliced viral pre-mRNAs (late transcripts) out of the nucleus of infected cells. These pre-mRNAs carry a recognition sequence called Rev responsive element (RRE) located in the env gene, that is not present in fully spliced viral mRNAs (early transcripts). This function is essential since most viral proteins are translated from unspliced or partially spliced pre-mRNAs which cannot exit the nucleus by the pathway used by fully processed cellular mRNAs. Rev itself is translated from a fully spliced mRNA that readily exits the nucleus. Rev's nuclear localization signal (NLS) binds directly to KPNB1/Importin beta-1 without previous binding to KPNA1/Importin alpha-1. KPNB1 binds to the GDP bound form of RAN (Ran-GDP) and targets Rev to the nucleus. In the nucleus, the conversion from Ran-GDP to Ran-GTP dissociates Rev from KPNB1 and allows Rev's binding to the RRE in viral pre-mRNAs. Rev multimerization on the RRE via cooperative assembly exposes its nuclear export signal (NES) to the surface. Rev can then form a complex with XPO1/CRM1 and Ran-GTP, leading to nuclear export of the complex. Conversion from Ran-GTP to Ran-GDP mediates dissociation of the Rev/RRE/XPO1/RAN complex, so that Rev can return to the nucleus for a subsequent round of export. Beside KPNB1, also seems to interact with TNPO1/Transportin-1, RANBP5/IPO5 and IPO7/RANBP7 for nuclear import. The nucleoporin-like HRB/RIP is an essential cofactor that probably indirectly interacts with Rev to release HIV RNAs from the perinuclear region to the cytoplasm. In Homo sapiens (Human), this protein is Protein Rev.